Reading from the N-terminus, the 550-residue chain is Chaperonin GroEL (550 aa).

ATP-binding positions include 30–33, lysine 51, 87–91, glycine 415, and aspartate 496; these read TLGP and DGTTT.

Belongs to the chaperonin (HSP60) family. Forms a cylinder of 14 subunits composed of two heptameric rings stacked back-to-back. Interacts with the co-chaperonin GroES.

Its subcellular location is the cytoplasm. The enzyme catalyses ATP + H2O + a folded polypeptide = ADP + phosphate + an unfolded polypeptide.. In terms of biological role, together with its co-chaperonin GroES, plays an essential role in assisting protein folding. The GroEL-GroES system forms a nano-cage that allows encapsulation of the non-native substrate proteins and provides a physical environment optimized to promote and accelerate protein folding. This chain is Chaperonin GroEL, found in Rickettsia bellii (strain OSU 85-389).